We begin with the raw amino-acid sequence, 203 residues long: Protein GrpE (203 aa).

Residues 1–38 are disordered; the sequence is MTQDQTAEQMPAAESADQSADQGPAAESAAPPAVDSER.

Belongs to the GrpE family. Homodimer.

Its subcellular location is the cytoplasm. Functionally, participates actively in the response to hyperosmotic and heat shock by preventing the aggregation of stress-denatured proteins, in association with DnaK and GrpE. It is the nucleotide exchange factor for DnaK and may function as a thermosensor. Unfolded proteins bind initially to DnaJ; upon interaction with the DnaJ-bound protein, DnaK hydrolyzes its bound ATP, resulting in the formation of a stable complex. GrpE releases ADP from DnaK; ATP binding to DnaK triggers the release of the substrate protein, thus completing the reaction cycle. Several rounds of ATP-dependent interactions between DnaJ, DnaK and GrpE are required for fully efficient folding. In Paramagnetospirillum magneticum (strain ATCC 700264 / AMB-1) (Magnetospirillum magneticum), this protein is Protein GrpE.